We begin with the raw amino-acid sequence, 518 residues long: Probable bifunctional methylthioribulose-1-phosphate dehydratase/enolase-phosphatase E1 (518 aa).

The tract at residues 1–242 is methylthioribulose-1-phosphate dehydratase; the sequence is MACCGGGRGE…AIKLYQLGID (242 aa). Position 114 (C114) interacts with substrate. The Zn(2+) site is built by H132 and H134. E157 functions as the Proton donor/acceptor; for methylthioribulose-1-phosphate dehydratase activity in the catalytic mechanism. H207 provides a ligand contact to Zn(2+). The tract at residues 279-518 is enolase-phosphatase E1; sequence VVLDIEGTTT…FRTIKSFSEI (240 aa). Positions 282 and 284 each coordinate Mg(2+). Substrate-binding positions include 417–418 and K451; that span reads SS. D477 provides a ligand contact to Mg(2+).

This sequence in the N-terminal section; belongs to the aldolase class II family. MtnB subfamily. The protein in the C-terminal section; belongs to the HAD-like hydrolase superfamily. MasA/MtnC family. It depends on Zn(2+) as a cofactor. The cofactor is Mg(2+).

The enzyme catalyses 5-(methylsulfanyl)-D-ribulose 1-phosphate = 5-methylsulfanyl-2,3-dioxopentyl phosphate + H2O. The catalysed reaction is 5-methylsulfanyl-2,3-dioxopentyl phosphate + H2O = 1,2-dihydroxy-5-(methylsulfanyl)pent-1-en-3-one + phosphate. The protein operates within amino-acid biosynthesis; L-methionine biosynthesis via salvage pathway; L-methionine from S-methyl-5-thio-alpha-D-ribose 1-phosphate: step 2/6. It functions in the pathway amino-acid biosynthesis; L-methionine biosynthesis via salvage pathway; L-methionine from S-methyl-5-thio-alpha-D-ribose 1-phosphate: step 3/6. It participates in amino-acid biosynthesis; L-methionine biosynthesis via salvage pathway; L-methionine from S-methyl-5-thio-alpha-D-ribose 1-phosphate: step 4/6. The protein is Probable bifunctional methylthioribulose-1-phosphate dehydratase/enolase-phosphatase E1 of Oryza sativa subsp. indica (Rice).